The following is a 397-amino-acid chain: 1-deoxy-D-xylulose 5-phosphate reductoisomerase (397 aa).

Positions 10, 11, 12, 13, 36, 38, and 124 each coordinate NADPH. Residue lysine 125 coordinates 1-deoxy-D-xylulose 5-phosphate. Glutamate 126 is an NADPH binding site. Mn(2+) is bound at residue aspartate 150. 1-deoxy-D-xylulose 5-phosphate-binding residues include serine 151, glutamate 152, serine 186, and histidine 209. Glutamate 152 lines the Mn(2+) pocket. Position 215 (glycine 215) interacts with NADPH. Residues serine 222, asparagine 227, lysine 228, and glutamate 231 each contribute to the 1-deoxy-D-xylulose 5-phosphate site. Glutamate 231 contacts Mn(2+).

It belongs to the DXR family. Requires Mg(2+) as cofactor. It depends on Mn(2+) as a cofactor.

The enzyme catalyses 2-C-methyl-D-erythritol 4-phosphate + NADP(+) = 1-deoxy-D-xylulose 5-phosphate + NADPH + H(+). It functions in the pathway isoprenoid biosynthesis; isopentenyl diphosphate biosynthesis via DXP pathway; isopentenyl diphosphate from 1-deoxy-D-xylulose 5-phosphate: step 1/6. In terms of biological role, catalyzes the NADPH-dependent rearrangement and reduction of 1-deoxy-D-xylulose-5-phosphate (DXP) to 2-C-methyl-D-erythritol 4-phosphate (MEP). The polypeptide is 1-deoxy-D-xylulose 5-phosphate reductoisomerase (Photobacterium profundum (strain SS9)).